The sequence spans 108 residues: Large ribosomal subunit protein uL24 (108 aa).

Belongs to the universal ribosomal protein uL24 family. In terms of assembly, part of the 50S ribosomal subunit.

Functionally, one of two assembly initiator proteins, it binds directly to the 5'-end of the 23S rRNA, where it nucleates assembly of the 50S subunit. One of the proteins that surrounds the polypeptide exit tunnel on the outside of the subunit. The sequence is that of Large ribosomal subunit protein uL24 from Mycoplasma capricolum subsp. capricolum (strain California kid / ATCC 27343 / NCTC 10154).